We begin with the raw amino-acid sequence, 544 residues long: D-2-hydroxyglutarate dehydrogenase, mitochondrial (544 aa).

The N-terminal 10 residues, 1-10, are a transit peptide targeting the mitochondrion; sequence MMMPRLVPRW. One can recognise an FAD-binding PCMH-type domain in the interval 119–298; sequence VRGSSKVLLR…TAVSILCPPK (180 aa). Residue lysine 124 is modified to N6-succinyllysine. Arginine 409, threonine 413, and lysine 424 together coordinate (R)-2-hydroxyglutarate. Arginine 409 contributes to the (R)-lactate binding site. (R)-malate is bound by residues arginine 409, threonine 413, and lysine 424. Positions 457 and 464 each coordinate Zn(2+). Position 466 (asparagine 466) interacts with (R)-2-hydroxyglutarate. Glutamate 498 is a Zn(2+) binding site. Histidine 499 contacts (R)-2-hydroxyglutarate. Residue histidine 499 coordinates (R)-lactate. Histidine 499 is a binding site for (R)-malate.

It belongs to the FAD-binding oxidoreductase/transferase type 4 family. It depends on FAD as a cofactor.

It is found in the mitochondrion. It catalyses the reaction (R)-2-hydroxyglutarate + A = 2-oxoglutarate + AH2. It carries out the reaction (R)-malate + A = oxaloacetate + AH2. Its activity is regulated as follows. Activated by zinc and cobalt ions. In terms of biological role, catalyzes the oxidation of D-2-hydroxyglutarate (D-2-HG) to alpha-ketoglutarate. Also catalyzes the oxidation of other D-2-hydroxyacids, such as D-malate (D-MAL) and D-lactate (D-LAC). Exhibits high activities towards D-2-HG and D-MAL but a very weak activity towards D-LAC. The protein is D-2-hydroxyglutarate dehydrogenase, mitochondrial (D2HGDH) of Bos taurus (Bovine).